The chain runs to 585 residues: Aspartate--tRNA ligase (585 aa).

Glu-171 serves as a coordination point for L-aspartate. The segment at 195–198 is aspartate; it reads QLFK. Position 217 (Arg-217) interacts with L-aspartate. ATP is bound by residues 217 to 219 and Gln-226; that span reads RDE. His-448 contributes to the L-aspartate binding site. Glu-482 is a binding site for ATP. Arg-489 is an L-aspartate binding site. Residue 534–537 coordinates ATP; sequence GLDR.

Belongs to the class-II aminoacyl-tRNA synthetase family. Type 1 subfamily. As to quaternary structure, homodimer.

The protein localises to the cytoplasm. It carries out the reaction tRNA(Asp) + L-aspartate + ATP = L-aspartyl-tRNA(Asp) + AMP + diphosphate. Catalyzes the attachment of L-aspartate to tRNA(Asp) in a two-step reaction: L-aspartate is first activated by ATP to form Asp-AMP and then transferred to the acceptor end of tRNA(Asp). The polypeptide is Aspartate--tRNA ligase (Histophilus somni (strain 129Pt) (Haemophilus somnus)).